Here is a 38-residue protein sequence, read N- to C-terminus: Trypsin inhibitor DE5 beta chain (38 aa).

The protein belongs to the protease inhibitor I3 (leguminous Kunitz-type inhibitor) family. In terms of assembly, heterodimer of an alpha and a beta chain linked by a disulfide bond.

Inhibition of trypsin. In Adenanthera pavonina (Sandal bead tree), this protein is Trypsin inhibitor DE5 beta chain.